Consider the following 349-residue polypeptide: Cobalt-precorrin-5B C(1)-methyltransferase (349 aa).

The protein belongs to the CbiD family.

The enzyme catalyses Co-precorrin-5B + S-adenosyl-L-methionine = Co-precorrin-6A + S-adenosyl-L-homocysteine. Its pathway is cofactor biosynthesis; adenosylcobalamin biosynthesis; cob(II)yrinate a,c-diamide from sirohydrochlorin (anaerobic route): step 6/10. Its function is as follows. Catalyzes the methylation of C-1 in cobalt-precorrin-5B to form cobalt-precorrin-6A. This is Cobalt-precorrin-5B C(1)-methyltransferase from Saccharolobus islandicus (strain Y.N.15.51 / Yellowstone #2) (Sulfolobus islandicus).